A 172-amino-acid chain; its full sequence is 3-hydroxydecanoyl-[acyl-carrier-protein] dehydratase (172 aa).

Histidine 71 is a catalytic residue.

Belongs to the thioester dehydratase family. FabA subfamily. Homodimer.

It is found in the cytoplasm. It carries out the reaction a (3R)-hydroxyacyl-[ACP] = a (2E)-enoyl-[ACP] + H2O. It catalyses the reaction (3R)-hydroxydecanoyl-[ACP] = (2E)-decenoyl-[ACP] + H2O. The catalysed reaction is (2E)-decenoyl-[ACP] = (3Z)-decenoyl-[ACP]. The protein operates within lipid metabolism; fatty acid biosynthesis. In terms of biological role, necessary for the introduction of cis unsaturation into fatty acids. Catalyzes the dehydration of (3R)-3-hydroxydecanoyl-ACP to E-(2)-decenoyl-ACP and then its isomerization to Z-(3)-decenoyl-ACP. Can catalyze the dehydratase reaction for beta-hydroxyacyl-ACPs with saturated chain lengths up to 16:0, being most active on intermediate chain length. The protein is 3-hydroxydecanoyl-[acyl-carrier-protein] dehydratase of Escherichia coli (strain SE11).